Consider the following 91-residue polypeptide: Elongation factor 1-beta (91 aa).

Belongs to the EF-1-beta/EF-1-delta family.

Functionally, promotes the exchange of GDP for GTP in EF-1-alpha/GDP, thus allowing the regeneration of EF-1-alpha/GTP that could then be used to form the ternary complex EF-1-alpha/GTP/AAtRNA. The chain is Elongation factor 1-beta from Caldivirga maquilingensis (strain ATCC 700844 / DSM 13496 / JCM 10307 / IC-167).